The following is a 102-amino-acid chain: Small ribosomal subunit protein uS10 (102 aa).

This sequence belongs to the universal ribosomal protein uS10 family. Part of the 30S ribosomal subunit.

In terms of biological role, involved in the binding of tRNA to the ribosomes. The sequence is that of Small ribosomal subunit protein uS10 from Oceanobacillus iheyensis (strain DSM 14371 / CIP 107618 / JCM 11309 / KCTC 3954 / HTE831).